Here is a 133-residue protein sequence, read N- to C-terminus: Large ribosomal subunit protein bL17 (133 aa).

The protein belongs to the bacterial ribosomal protein bL17 family. Part of the 50S ribosomal subunit. Contacts protein L32.

The protein is Large ribosomal subunit protein bL17 of Nitratidesulfovibrio vulgaris (strain DSM 19637 / Miyazaki F) (Desulfovibrio vulgaris).